A 439-amino-acid polypeptide reads, in one-letter code: Tol-Pal system protein TolB (439 aa).

An N-terminal signal peptide occupies residues 1–22 (MKKPLRWLAALTVLLLPLSALA).

This sequence belongs to the TolB family. The Tol-Pal system is composed of five core proteins: the inner membrane proteins TolA, TolQ and TolR, the periplasmic protein TolB and the outer membrane protein Pal. They form a network linking the inner and outer membranes and the peptidoglycan layer.

The protein localises to the periplasm. Functionally, part of the Tol-Pal system, which plays a role in outer membrane invagination during cell division and is important for maintaining outer membrane integrity. This chain is Tol-Pal system protein TolB, found in Xanthomonas oryzae pv. oryzae (strain PXO99A).